The following is a 244-amino-acid chain: Large ribosomal subunit protein bL25 (244 aa).

The interval 197–244 is disordered; it reads ADVEAEAAEAALAKEAATEAAEEEETEKPASEAEASGEAEQADTDKKE. Positions 204 to 215 are enriched in low complexity; sequence AEAALAKEAATE.

It belongs to the bacterial ribosomal protein bL25 family. CTC subfamily. In terms of assembly, part of the 50S ribosomal subunit; part of the 5S rRNA/L5/L18/L25 subcomplex. Contacts the 5S rRNA. Binds to the 5S rRNA independently of L5 and L18.

Functionally, this is one of the proteins that binds to the 5S RNA in the ribosome where it forms part of the central protuberance. This chain is Large ribosomal subunit protein bL25, found in Coxiella burnetii (strain CbuK_Q154) (Coxiella burnetii (strain Q154)).